Here is a 229-residue protein sequence, read N- to C-terminus: Glutamine amidotransferase-like class 1 domain-containing protein 1 (229 aa).

The signal sequence occupies residues 1–34 (MKKQGAPVSGGGTERLTKPSCLMVGSAVAEGVSA). N-linked (GlcNAc...) asparagine glycosylation is found at asparagine 154 and asparagine 212.

This sequence belongs to the peptidase C56 family. Homotetramer. Component of the FERRY complex.

Its subcellular location is the secreted. It localises to the early endosome. Its function is as follows. Component of the FERRY complex (Five-subunit Endosomal Rab5 and RNA/ribosome intermediary). The FERRY complex directly interacts with mRNAs and RAB5A, and functions as a RAB5A effector involved in the localization and the distribution of specific mRNAs most likely by mediating their endosomal transport. The complex recruits mRNAs and ribosomes to early endosomes through direct mRNA-interaction. The protein is Glutamine amidotransferase-like class 1 domain-containing protein 1 of Xenopus laevis (African clawed frog).